The primary structure comprises 240 residues: Anti-H(O) lectin (240 aa).

Asn4 carries N-linked (GlcNAc...) asparagine glycosylation. The Mn(2+) site is built by Glu124 and Asp126. Ca(2+) contacts are provided by Asp126, Tyr128, Asn130, and Asp133. Mn(2+) is bound by residues Asp133 and His141.

It belongs to the leguminous lectin family.

In terms of biological role, L-fucose specific lectin. The sequence is that of Anti-H(O) lectin from Lotus tetragonolobus (Winged pea).